A 621-amino-acid polypeptide reads, in one-letter code: MPASSFGESSAHIRRRRVAHYLRTESGAAVLLVIVTVVALVWANSPLSNAYFELWHLDVGFNFGPLRLHMDLHHWVNDGLMVVFFFLIGLEVRQEFAHGSLRDRSRARLALIAGVTGVVLPALVYVLIVKLAGSEGLHGWGAVVGTDTAFMLGTLAIVGPRLSGQLRVFLLTLTVVDDFLAVSIIGIVYSEEIRIVPLLIALASLVGLWLLGRTRQWRATPYVLIVIVLWFATVYSGIHASLAGMAAGLLIPAYATQRHGVVAARQLFRDFWQSPSAASARAVDCGLSRGISVNERLHEFLRLPTALLIVPIFALANAGVDVRGGLLAEAFGSPVTWGVIAGLVLGKLLGIGLTTLVAVRLGLGRLPEGVGVGSVFGGAALSGIGFTVSLLIIGLAFGTTSDLGRQATVGVLVSMVFATLLGWLIFKVAAQRWGEKTADLPMVLEPPVDPEIDHIRGPEDAQLTLVEYVDFECAYCAHATGSWDDLRAHFGDDLRYVVRHLPHHPHGPIAARASEAAANQGMFWPWLDFVFTRQHALEREHLIGYAAELGLDVERFIADLDSPAVIERVERDLASAVASGAHATPTFFVEGRRLRGSYDARTVTAVLEASRRGTRTQEVPS.

The tract at residues 1-430 (MPASSFGESS…LGWLIFKVAA (430 aa)) is na(+)/H(+) antiporter NhaA. Transmembrane regions (helical) follow at residues 27–47 (GAAVLLVIVTVVALVWANSPL), 72–92 (LHHWVNDGLMVVFFFLIGLEV), 109–129 (LALIAGVTGVVLPALVYVLIV), 139–159 (GWGAVVGTDTAFMLGTLAIVG), 168–188 (VFLLTLTVVDDFLAVSIIGIV), 192–212 (EIRIVPLLIALASLVGLWLLG), 223–243 (VLIVIVLWFATVYSGIHASLA), 300–320 (FLRLPTALLIVPIFALANAGV), 339–359 (VIAGLVLGKLLGIGLTTLVAV), 375–395 (VFGGAALSGIGFTVSLLIIGL), and 409–429 (VGVLVSMVFATLLGWLIFKVA). A Thioredoxin domain is found at 431 to 578 (QRWGEKTADL…VERDLASAVA (148 aa)).

In the N-terminal section; belongs to the NhaA Na(+)/H(+) (TC 2.A.33) antiporter family.

It is found in the cell inner membrane. It carries out the reaction Na(+)(in) + 2 H(+)(out) = Na(+)(out) + 2 H(+)(in). In terms of biological role, na(+)/H(+) antiporter that extrudes sodium in exchange for external protons. This chain is Na(+)/H(+) antiporter NhaA, found in Herminiimonas arsenicoxydans.